The following is a 118-amino-acid chain: MCFPVGGLLPYLALRSVAYICVFGDSSRAPDLIREAFESPHFKRFDGAGTYKEAKGRCGMRFADVVNGAFGQISDMADKVGKGEPEVWCIWKKRGEVEMLLKVKEYRKGYGSGKRRRR.

This sequence belongs to the UPF0329 family.

In Encephalitozoon cuniculi (strain GB-M1) (Microsporidian parasite), this protein is UPF0329 protein ECU03_0030/ECU05_0040/ECU06_0010/ECU06_1710/ECU11_0010.